The sequence spans 128 residues: Sulfurtransferase TusD (128 aa).

The Cysteine persulfide intermediate role is filled by cysteine 78.

The protein belongs to the DsrE/TusD family. Heterohexamer, formed by a dimer of trimers. The hexameric TusBCD complex contains 2 copies each of TusB, TusC and TusD. The TusBCD complex interacts with TusE.

The protein resides in the cytoplasm. Part of a sulfur-relay system required for 2-thiolation of 5-methylaminomethyl-2-thiouridine (mnm(5)s(2)U) at tRNA wobble positions. Accepts sulfur from TusA and transfers it in turn to TusE. The protein is Sulfurtransferase TusD of Escherichia coli O127:H6 (strain E2348/69 / EPEC).